The chain runs to 499 residues: Tetrathionate hydrolase (499 aa).

The N-terminal stretch at 1-32 (MPSIVRNHGPHNKILLSALLLALFGWVPLASA) is a signal peptide.

It belongs to the tetrathionate hydrolase family. As to quaternary structure, homodimer.

The protein resides in the cell membrane. The catalysed reaction is tetrathionate + H2O = sulfur + thiosulfate + sulfate + H(+). In terms of biological role, catalyzes the hydrolysis of tetrathionate to generate elemental sulfur, thiosulfate and sulfate. This Acidithiobacillus ferrooxidans (strain ATCC 23270 / DSM 14882 / CIP 104768 / NCIMB 8455) (Ferrobacillus ferrooxidans (strain ATCC 23270)) protein is Tetrathionate hydrolase.